Reading from the N-terminus, the 466-residue chain is ATP synthase subunit beta (466 aa).

148 to 155 (GGAGVGKT) lines the ATP pocket.

The protein belongs to the ATPase alpha/beta chains family. As to quaternary structure, F-type ATPases have 2 components, CF(1) - the catalytic core - and CF(0) - the membrane proton channel. CF(1) has five subunits: alpha(3), beta(3), gamma(1), delta(1), epsilon(1). CF(0) has three main subunits: a(1), b(2) and c(9-12). The alpha and beta chains form an alternating ring which encloses part of the gamma chain. CF(1) is attached to CF(0) by a central stalk formed by the gamma and epsilon chains, while a peripheral stalk is formed by the delta and b chains.

Its subcellular location is the cell inner membrane. The catalysed reaction is ATP + H2O + 4 H(+)(in) = ADP + phosphate + 5 H(+)(out). Functionally, produces ATP from ADP in the presence of a proton gradient across the membrane. The catalytic sites are hosted primarily by the beta subunits. The polypeptide is ATP synthase subunit beta (Herminiimonas arsenicoxydans).